A 42-amino-acid chain; its full sequence is Conotoxin Au11.6 (42 aa).

4 disulfide bridges follow: Cys-6/Cys-20, Cys-13/Cys-25, Cys-19/Cys-30, and Cys-24/Cys-37.

Belongs to the conotoxin I1 superfamily. As to expression, expressed by the venom duct.

The protein localises to the secreted. This is Conotoxin Au11.6 from Conus aulicus (Princely cone).